Reading from the N-terminus, the 70-residue chain is Large ribosomal subunit protein bL31 (70 aa).

Positions 16, 18, 38, and 41 each coordinate Zn(2+).

The protein belongs to the bacterial ribosomal protein bL31 family. Type A subfamily. In terms of assembly, part of the 50S ribosomal subunit. Zn(2+) serves as cofactor.

Binds the 23S rRNA. The protein is Large ribosomal subunit protein bL31 of Saccharopolyspora erythraea (strain ATCC 11635 / DSM 40517 / JCM 4748 / NBRC 13426 / NCIMB 8594 / NRRL 2338).